We begin with the raw amino-acid sequence, 164 residues long: MADS-box transcription factor 51 (164 aa).

Positions 2–62 (ARRGRVQLRR…GKLYEYSSSS (61 aa)) constitute an MADS-box domain. A disordered region spans residues 133–164 (TKSKKMLAKQNGEGSRSRANSSGSRGQEEGSA).

In terms of tissue distribution, widely expressed.

The protein resides in the nucleus. Its function is as follows. Probable transcription factor involved in the regulation of flowering time under short day (SD) conditions. Functions as a promoter of flowering under SD conditions, upstream of EHD1, HD3A and MADS14, but downstream of GIGANTEA (GI). May transmit a SD promotion signal from GI to EHD1. Functions independently of MADS50 to control flowering time. This Oryza sativa subsp. japonica (Rice) protein is MADS-box transcription factor 51.